The following is a 198-amino-acid chain: Nucleoid occlusion factor SlmA (198 aa).

The 62-residue stretch at 9-70 folds into the HTH tetR-type domain; the sequence is RNRREEILQA…SLIEFIEDTL (62 aa). The H-T-H motif DNA-binding region spans 33–52; that stretch reads TTAKLAANVGVSEAALYRHF. Residues 117–144 are a coiled coil; the sequence is EQDRLQGRINQLFERIEAQLRQVLKERR.

The protein belongs to the nucleoid occlusion factor SlmA family. As to quaternary structure, homodimer. Interacts with FtsZ.

The protein resides in the cytoplasm. Its subcellular location is the nucleoid. Functionally, required for nucleoid occlusion (NO) phenomenon, which prevents Z-ring formation and cell division over the nucleoid. Acts as a DNA-associated cell division inhibitor that binds simultaneously chromosomal DNA and FtsZ, and disrupts the assembly of FtsZ polymers. SlmA-DNA-binding sequences (SBS) are dispersed on non-Ter regions of the chromosome, preventing FtsZ polymerization at these regions. This Edwardsiella ictaluri (strain 93-146) protein is Nucleoid occlusion factor SlmA.